Consider the following 283-residue polypeptide: MRCSAVSLGSGTIINAIATGFGSAFGVDLKIKADVELVDNCKKIINGISIDNPTLKPSLVERCVKNVLDHFEVDYSAKISTSGDIPIKSGLSSSSAASNAAVLATIGALGEKVDSDLVLDLAIKSSFEEKLTITGAYDDATASYFGGITVCNNMERKILKKDEFKEDIKVIVLMPEFQKNVDVNRMKLIKDYVEIAFEKCMEGDYYKALFLNGLLYSSALNFPSNISVDALEAGAITAGLSGTGPSYVALCYSEDKKNVENALKKYGNTVITKPSTNGARILY.

Residue 86 to 96 (PIKSGLSSSSA) coordinates ATP.

Belongs to the GHMP kinase family. Archaeal shikimate kinase subfamily.

The protein localises to the cytoplasm. It carries out the reaction shikimate + ATP = 3-phosphoshikimate + ADP + H(+). Its pathway is metabolic intermediate biosynthesis; chorismate biosynthesis; chorismate from D-erythrose 4-phosphate and phosphoenolpyruvate: step 5/7. In Methanococcus maripaludis (strain C5 / ATCC BAA-1333), this protein is Shikimate kinase.